We begin with the raw amino-acid sequence, 519 residues long: Cytochrome P450 monooxygenase easM (519 aa).

The helical transmembrane segment at 16-33 threads the bilayer; it reads VAPALFASSISVLFLILS. 2 N-linked (GlcNAc...) asparagine glycosylation sites follow: N50 and N353. C458 is a heme binding site.

It belongs to the cytochrome P450 family. Requires heme as cofactor.

Its subcellular location is the membrane. It participates in alkaloid biosynthesis; ergot alkaloid biosynthesis. In terms of biological role, cytochrome P450 monooxygenase; part of the gene cluster that mediates the biosynthesis of fumiclavanine C, a fungal ergot alkaloid. DmaW catalyzes the first step of ergot alkaloid biosynthesis by condensing dimethylallyl diphosphate (DMAP) and tryptophan to form 4-dimethylallyl-L-tryptophan. The second step is catalyzed by the methyltransferase easF that methylates 4-dimethylallyl-L-tryptophan in the presence of S-adenosyl-L-methionine, resulting in the formation of 4-dimethylallyl-L-abrine. The catalase easC and the FAD-dependent oxidoreductase easE then transform 4-dimethylallyl-L-abrine to chanoclavine-I which is further oxidized by EasD in the presence of NAD(+), resulting in the formation of chanoclavine-I aldehyde. EasA reduces chanoclavine-I aldehyde to dihydrochanoclavine-I aldehyde that spontaneously dehydrates to form 6,8-dimethyl-6,7-didehydroergoline. EasG then catalyzes the reduction of 6,8-dimethyl-6,7-didehydroergoline to form festuclavine. Hydrolysis of festuclavine by easM then leads to the formation of fumigaclavine B which is in turn acetylated by easN to fumigaclavine A. Finally, easL catalyzes the conversion of fumigaclavine A into fumigaclavine C by attaching a dimethylallyl moiety to C-2 of the indole nucleus. The polypeptide is Cytochrome P450 monooxygenase easM (Aspergillus fumigatus (strain ATCC MYA-4609 / CBS 101355 / FGSC A1100 / Af293) (Neosartorya fumigata)).